Here is a 120-residue protein sequence, read N- to C-terminus: Small ribosomal subunit protein bS6 (120 aa).

It belongs to the bacterial ribosomal protein bS6 family.

Functionally, binds together with bS18 to 16S ribosomal RNA. The polypeptide is Small ribosomal subunit protein bS6 (Blochmanniella floridana).